A 716-amino-acid polypeptide reads, in one-letter code: Fusoxypene synthase (716 aa).

The segment at 4 to 328 is sesterterpenoid synthase; it reads LSYQSRLIPP…WLSACSRQNT (325 aa). Mg(2+) is bound at residue aspartate 96. Aspartate 96 contributes to the substrate binding site. Positions 187-190 are substrate; the sequence is RMTN. Asparagine 231 contributes to the substrate binding site. The substrate stretch occupies residues 235-239; the sequence is SYERE. A geranylfarnesyl diphosphate synthase region spans residues 329–711; it reads WKTNCSIDGK…CLATLSMEGC (383 aa). Isopentenyl diphosphate is bound by residues lysine 422, arginine 425, and histidine 454. Mg(2+)-binding residues include aspartate 461 and aspartate 465. Arginine 470 contacts dimethylallyl diphosphate. Arginine 471 serves as a coordination point for isopentenyl diphosphate. Dimethylallyl diphosphate contacts are provided by lysine 548, threonine 549, glutamine 587, asparagine 594, and lysine 602.

The protein in the N-terminal section; belongs to the terpene synthase family. It in the C-terminal section; belongs to the FPP/GGPP synthase family.

The enzyme catalyses 4 isopentenyl diphosphate + dimethylallyl diphosphate = (2E,6E,10E,14E)-geranylfarnesyl diphosphate + 4 diphosphate. It catalyses the reaction (2E,6E,10E,14E)-geranylfarnesyl diphosphate = fusoxypene A + diphosphate. The catalysed reaction is (2E,6E,10E,14E)-geranylfarnesyl diphosphate = fusoxypene B + diphosphate. It carries out the reaction (2E,6E,10E,14E)-geranylfarnesyl diphosphate = fusoxypene C + diphosphate. The enzyme catalyses (2E,6E,10E,14E)-geranylfarnesyl diphosphate = (-)-astellatene + diphosphate. In terms of biological role, bifunctional sesterterpenoid synthase that performs both prenyl transferase and terpene cyclase activity, converting isopentenyl diphosphate and dimethylallyl diphosphate into geranylfarnesyl diphosphate (GFPP) and then converting GFPP into the enantiomeric sesterterpenes with a 5-6-7-3-5 ring system fusoxypene A, fusoxypene B, fusoxypene C and (-)-astellatene. The sequence is that of Fusoxypene synthase from Fusarium oxysporum (Fusarium vascular wilt).